The chain runs to 298 residues: dTDP-4-dehydrorhamnose reductase (298 aa).

Residues 10-12, 35-36, and 59-61 contribute to the NADH site; these read GQV, DL, and AYT. NADPH-binding positions include 11 to 12, 35 to 36, 59 to 61, and tyrosine 98; these read QV, DL, and AYT. 100–101 provides a ligand contact to dTDP-beta-L-rhamnose; the sequence is TD. Positions 124 and 128 each coordinate NADH. The NADPH site is built by tyrosine 124 and lysine 128. Residue tyrosine 124 is the Proton donor/acceptor of the active site. Tryptophan 149 contributes to the dTDP-beta-L-rhamnose binding site.

Belongs to the dTDP-4-dehydrorhamnose reductase family. As to quaternary structure, homodimer. It depends on Mg(2+) as a cofactor.

The catalysed reaction is dTDP-beta-L-rhamnose + NADP(+) = dTDP-4-dehydro-beta-L-rhamnose + NADPH + H(+). It functions in the pathway carbohydrate biosynthesis; dTDP-L-rhamnose biosynthesis. The protein operates within bacterial outer membrane biogenesis; LPS O-antigen biosynthesis. Its function is as follows. Involved in the biosynthesis of the dTDP-L-rhamnose which is an important component of lipopolysaccharide (LPS). Catalyzes the reduction of dTDP-6-deoxy-L-lyxo-4-hexulose to yield dTDP-L-rhamnose. This Burkholderia thailandensis (strain ATCC 700388 / DSM 13276 / CCUG 48851 / CIP 106301 / E264) protein is dTDP-4-dehydrorhamnose reductase.